A 697-amino-acid polypeptide reads, in one-letter code: MPAAAGDGLGESPSRFLAGEKPPVQLAESFLPACVSSVSRETLRTFQHTKRVGSYLIGRKLGEGSFAKVREGLHVGTGEKVAIKVIDKKKAKKDTYVTKNLRREGQIQQMIRHPNITQLLDILETENSYYLVMELCTGGNLMHKIYERKRIEEHEARKYIRQLILAVEHLHRAGVVHRDLKIENLLLDENNNIKLIDFGLSNCAGILGYTDPFSTQCGSPAYAAPELLARKKYGPKVDVWSIGVNMYAMLTGTLPFTVEPFSLRALYQKMVDKDMNPLPTHLSPAAISFLRSLLEPDPLKRPNIQQALANRWLNDNYHGKGLHTYPNRIHLEDLSQSVVLHMSEKLGYKHSDVINVILSNRACHTLAVYFLLNRKLENYLLNMRKPDINDNVCHKNQFHQLEKYKMNKNSYEERRSKDLEKRGEQQQQQQRAMQRKLEKCSPSHRQSNCLTPQGHISKGPVKERRSSKSERESFGGLSPFHEVRITKPGCMTSCSLEYLEMQSPDPRTPKIMRRQDSHSQETVNVNMGSRIRETHLNVVRSFESVNREDQIESLSPNHQYRVLGSPVSFSPRHSSERILSPIFQFDNTSPIKGHSNQASFTYDDKSSPSSPESMSPTSPHSPHSPSCNNNISGNLGSPNCVRSRGRFPMMGIGQMLRKRNQVVSPKAEKPLETRMPALHQMSPGYASFNSSDMNGFC.

The region spanning 55–313 is the Protein kinase domain; that stretch reads YLIGRKLGEG…IQQALANRWL (259 aa). Residues 61–69 and lysine 84 each bind ATP; that span reads LGEGSFAKV. The active-site Proton acceptor is the aspartate 179. 2 stretches are compositionally biased toward basic and acidic residues: residues 405-424 and 460-473; these read KMNK…KRGE and PVKE…ERES. Disordered regions lie at residues 405-480 and 586-642; these read KMNK…LSPF and DNTS…NCVR. Positions 586 to 600 are enriched in polar residues; sequence DNTSPIKGHSNQASF. A compositionally biased stretch (low complexity) spans 607-626; it reads SPSSPESMSPTSPHSPHSPS. The span at 627–637 shows a compositional bias: polar residues; sequence CNNNISGNLGS.

The protein belongs to the protein kinase superfamily. CAMK Ser/Thr protein kinase family. SNF1 subfamily.

It carries out the reaction L-seryl-[protein] + ATP = O-phospho-L-seryl-[protein] + ADP + H(+). The catalysed reaction is L-threonyl-[protein] + ATP = O-phospho-L-threonyl-[protein] + ADP + H(+). The chain is Hormonally up-regulated neu tumor-associated kinase homolog (hunk) from Xenopus tropicalis (Western clawed frog).